The chain runs to 187 residues: MATWGRRRAGPGGRERVALAAGECYIVHEIYNGENAQDQFEYELEQALEAQYKYIVIEPTRIGDETARWISVGNCLHKTAVLSGTACLLTPLALPSEYSHYVSLPAGVLSLACSTLYGISWQFDPCCKYQVEYDAYKLSRLPLHTLTSSTPVVLVRKDDMHRKRLHNTIALAALAYCMKKIYELYSV.

2 consecutive transmembrane segments (helical) span residues 79-95 and 102-119; these read TAVLSGTACLLTPLALP and VSLPAGVLSLACSTLYGI.

Belongs to the TMEM11 family.

It is found in the mitochondrion inner membrane. In terms of biological role, plays a role in mitochondrial morphogenesis. The chain is Transmembrane protein 11-B, mitochondrial (tmem11-b) from Xenopus laevis (African clawed frog).